Here is a 338-residue protein sequence, read N- to C-terminus: Methionine synthase (338 aa).

Zn(2+) contacts are provided by histidine 210, cysteine 212, glutamate 234, and cysteine 294.

It belongs to the archaeal MetE family. Requires Zn(2+) as cofactor.

The protein operates within amino-acid biosynthesis; L-methionine biosynthesis via de novo pathway. Its function is as follows. Catalyzes the transfer of a methyl group to L-homocysteine resulting in methionine formation. The physiological methyl donor is unknown. In Pyrococcus abyssi (strain GE5 / Orsay), this protein is Methionine synthase.